Reading from the N-terminus, the 235-residue chain is Orotidine 5'-phosphate decarboxylase (235 aa).

Residues Asp-12, Lys-34, 61–70 (DLKFHDIPNT), Thr-121, Arg-182, Gln-191, Gly-211, and Arg-212 contribute to the substrate site. Lys-63 functions as the Proton donor in the catalytic mechanism.

The protein belongs to the OMP decarboxylase family. Type 1 subfamily. As to quaternary structure, homodimer.

It carries out the reaction orotidine 5'-phosphate + H(+) = UMP + CO2. It participates in pyrimidine metabolism; UMP biosynthesis via de novo pathway; UMP from orotate: step 2/2. Its function is as follows. Catalyzes the decarboxylation of orotidine 5'-monophosphate (OMP) to uridine 5'-monophosphate (UMP). In Marinomonas sp. (strain MWYL1), this protein is Orotidine 5'-phosphate decarboxylase.